Here is a 303-residue protein sequence, read N- to C-terminus: Coenzyme PQQ synthesis protein B (303 aa).

The protein belongs to the PqqB family.

Its pathway is cofactor biosynthesis; pyrroloquinoline quinone biosynthesis. In terms of biological role, may be involved in the transport of PQQ or its precursor to the periplasm. The sequence is that of Coenzyme PQQ synthesis protein B from Pseudomonas fluorescens (strain Pf0-1).